A 571-amino-acid chain; its full sequence is Exodeoxyribonuclease 1 (571 aa).

The segment at 1 to 96 (MGIKGLLGLL…STEQKRKERR (96 aa)) is N-domain. Mg(2+)-binding residues include D30, D78, E150, D152, D171, D173, and D225. Residues 114 to 245 (QAIMQFSRCV…KTALRYLQKY (132 aa)) are I-domain. Disordered regions lie at residues 464–489 (KEIDEQVPSQSNNTTPTSAKSDSASP) and 530–559 (RKNHASLPSRRIVYKPPSSPSTPISMNPRP). Residues 470 to 489 (VPSQSNNTTPTSAKSDSASP) are compositionally biased toward polar residues.

This sequence belongs to the XPG/RAD2 endonuclease family. EXO1 subfamily. In terms of assembly, monomer. The cofactor is Mg(2+).

Its subcellular location is the nucleus. Its function is as follows. 5'-&gt;3' double-stranded DNA exonuclease that could act in a pathway that corrects mismatched base pairs. The polypeptide is Exodeoxyribonuclease 1 (exo1) (Schizosaccharomyces pombe (strain 972 / ATCC 24843) (Fission yeast)).